A 210-amino-acid polypeptide reads, in one-letter code: Na(+)-translocating NADH-quinone reductase subunit D (210 aa).

Transmembrane regions (helical) follow at residues 10–30 (ILFA…GVCS), 42–62 (FVMT…VSLI), 72–92 (IIVQ…VLKA), 103–123 (VFVG…AYAM), 131–151 (FIDG…VAFF), and 178–198 (NGLM…IWAI).

This sequence belongs to the NqrDE/RnfAE family. As to quaternary structure, composed of six subunits; NqrA, NqrB, NqrC, NqrD, NqrE and NqrF.

The protein resides in the cell inner membrane. It carries out the reaction a ubiquinone + n Na(+)(in) + NADH + H(+) = a ubiquinol + n Na(+)(out) + NAD(+). NQR complex catalyzes the reduction of ubiquinone-1 to ubiquinol by two successive reactions, coupled with the transport of Na(+) ions from the cytoplasm to the periplasm. NqrA to NqrE are probably involved in the second step, the conversion of ubisemiquinone to ubiquinol. This Photobacterium profundum (strain SS9) protein is Na(+)-translocating NADH-quinone reductase subunit D.